Here is a 517-residue protein sequence, read N- to C-terminus: Cytochrome P450 11B, mitochondrial (517 aa).

A mitochondrion-targeting transit peptide spans 1-45 (MLEKTAARQIGSCLMRCRTLDTTSPLWTGFSRLSTAPLIHEARED). Cys-465 is a heme binding site.

Belongs to the cytochrome P450 family. Requires heme as cofactor.

Its subcellular location is the mitochondrion membrane. The enzyme catalyses a steroid + 2 reduced [adrenodoxin] + O2 + 2 H(+) = an 11beta-hydroxysteroid + 2 oxidized [adrenodoxin] + H2O. In terms of biological role, has 11 beta-hydroxylation, 18-hydroxylation activities and aldosterone synthetic activity. Catalyzes the final steps of glucocorticoid and mineralocorticoid biosynthesis. This chain is Cytochrome P450 11B, mitochondrial (CYP11B), found in Aquarana catesbeiana (American bullfrog).